We begin with the raw amino-acid sequence, 140 residues long: uncharacterized protein (140 aa).

Residues Ile-26–Leu-80 enclose the HTH cro/C1-type domain. The H-T-H motif DNA-binding region spans Met-37 to Arg-56.

This is an uncharacterized protein from Mycobacterium tuberculosis (strain ATCC 25618 / H37Rv).